Consider the following 362-residue polypeptide: MAPKQDPKPKFQEGERVLCFHGPLLYEAKCVKVAIKDKQVKYFIHYSGWNKKSAVRPRRSEKSLKTHEDIVALFPVPEGAPSVHHPLLTSSWDEWVPESRVLKYVDTNLQKQRELQKANQEQYAEGKMRGAAPGKKTSGLQQKNVEVKTKKNKQKTPGNGDGGSTSETPQPPRKKRARVDPTVENEETFMNRVEVKVKIPEELKPWLVDDWDLITRQKQLFYLPAKKNVDSILEDYANYKKSRGNTDNKEYAVNEVVAGIKEYFNVMLGTQLLYKFERPQYAEILADHPDAPMSQVYGAPHLLRLFVRIGAMLAYTPLDEKSLALLLNYLHDFLKYLAKNSATLFSASDYEVAPPEYHRKAV.

The Tudor-knot domain maps to 12 to 51 (QEGERVLCFHGPLLYEAKCVKVAIKDKQVKYFIHYSGWNK). The interaction with KAT8 stretch occupies residues 26–62 (YEAKCVKVAIKDKQVKYFIHYSGWNKKSAVRPRRSEK). Residues 113–182 (RELQKANQEQ…RKKRARVDPT (70 aa)) are disordered. The interval 133–266 (PGKKTSGLQQ…VAGIKEYFNV (134 aa)) is sufficient for interaction with SIN3A. Residues 135–146 (KKTSGLQQKNVE) carry the Nuclear localization signal motif. Residue Lys143 is modified to N6-acetyllysine. The interval 164–230 (STSETPQPPR…FYLPAKKNVD (67 aa)) is interaction with RB1-1. Residues 188-342 (TFMNRVEVKV…FLKYLAKNSA (155 aa)) are sufficient for interaction with PHF12. The MRG domain maps to 191 to 362 (NRVEVKVKIP…APPEYHRKAV (172 aa)). The interval 323-344 (LALLLNYLHDFLKYLAKNSATL) is interaction with RB1-2.

In terms of assembly, component of the NuA4 histone acetyltransferase complex which contains the catalytic subunit KAT5/TIP60 and the subunits EP400, TRRAP/PAF400, BRD8/SMAP, EPC1, DMAP1/DNMAP1, RUVBL1/TIP49, RUVBL2, ING3, actin, ACTL6A/BAF53A, MORF4L1/MRG15, MORF4L2/MRGX, MRGBP, YEATS4/GAS41, VPS72/YL1 and MEAF6. The NuA4 complex interacts with MYC and the adenovirus E1A protein. MORF4L1 may also participate in the formation of NuA4 related complexes which lack the KAT5/TIP60 catalytic subunit, but which include the SWI/SNF related protein SRCAP. Component of the mSin3A histone deacetylase complex, which includes SIN3A, HDAC2, ARID4B, MORF4L1, RBBP4/RbAp48, and RBBP7/RbAp46. May also interact with PHF12 and one or more as yet undefined members of the TLE (transducin-like enhancer of split) family of transcriptional repressors. Component of the SIN3B complex, which includes SIN3B, HDAC2 or HDAC1, PHF12 and MORF4L1. Interacts with RB1 and KAT8. Interacts with the N-terminus of MRFAP1. Found in a complex composed of MORF4L1, MRFAP1 and RB1. Interacts with the entire BRCA complex, which contains BRCA1, PALB2, BRCA2 and RAD51. Interacts with PALB2. Forms a complex with MSL1 and NUPR1.

Its subcellular location is the nucleus. In terms of biological role, component of the NuA4 histone acetyltransferase (HAT) complex which is involved in transcriptional activation of select genes principally by acetylation of nucleosomal histones H4 and H2A. This modification may both alter nucleosome - DNA interactions and promote interaction of the modified histones with other proteins which positively regulate transcription. This complex may be required for the activation of transcriptional programs associated with oncogene and proto-oncogene mediated growth induction, tumor suppressor mediated growth arrest and replicative senescence, apoptosis, and DNA repair. The NuA4 complex ATPase and helicase activities seem to be, at least in part, contributed by the association of RUVBL1 and RUVBL2 with EP400. NuA4 may also play a direct role in DNA repair when directly recruited to sites of DNA damage. As part of the SIN3B complex represses transcription and counteracts the histone acetyltransferase activity of EP300 through the recognition H3K27ac marks by PHF12 and the activity of the histone deacetylase HDAC2. SIN3B complex is recruited downstream of the constitutively active genes transcriptional start sites through interaction with histones and mitigates histone acetylation and RNA polymerase II progression within transcribed regions contributing to the regulation of transcription. Required for homologous recombination repair (HRR) and resistance to mitomycin C (MMC). Involved in the localization of PALB2, BRCA2 and RAD51, but not BRCA1, to DNA-damage foci. This is Mortality factor 4-like protein 1 from Homo sapiens (Human).